The following is a 172-amino-acid chain: UPF0102 protein AM1_3954 (172 aa).

Belongs to the UPF0102 family.

This chain is UPF0102 protein AM1_3954, found in Acaryochloris marina (strain MBIC 11017).